Consider the following 994-residue polypeptide: Glycine dehydrogenase (decarboxylating), mitochondrial (994 aa).

The N-terminal 21 residues, 1-21, are a transit peptide targeting the mitochondrion; it reads MLKLLRNNGINKLKSNLIRNY. At Lys-742 the chain carries N6-(pyridoxal phosphate)lysine.

The protein belongs to the GcvP family. In terms of assembly, homodimer. The glycine cleavage system is composed of four proteins: P, T, L and H. The cofactor is pyridoxal 5'-phosphate.

Its subcellular location is the mitochondrion. The enzyme catalyses N(6)-[(R)-lipoyl]-L-lysyl-[glycine-cleavage complex H protein] + glycine + H(+) = N(6)-[(R)-S(8)-aminomethyldihydrolipoyl]-L-lysyl-[glycine-cleavage complex H protein] + CO2. Its function is as follows. The glycine cleavage system catalyzes the degradation of glycine. The P protein binds the alpha-amino group of glycine through its pyridoxal phosphate cofactor; CO(2) is released and the remaining methylamine moiety is then transferred to the lipoamide cofactor of the H protein. This chain is Glycine dehydrogenase (decarboxylating), mitochondrial (gcvP), found in Dictyostelium discoideum (Social amoeba).